The chain runs to 335 residues: F420-dependent glucose-6-phosphate dehydrogenase (335 aa).

Asp40 provides a ligand contact to coenzyme F420-(gamma-Glu)n. The active-site Proton donor is the His41. Coenzyme F420-(gamma-Glu)n contacts are provided by residues Thr77 and 108-109 (TG). The active-site Proton acceptor is the Glu110. Residues Asn113, 177-178 (GG), and 180-181 (VV) each bind coenzyme F420-(gamma-Glu)n. Positions 195, 198, 259, and 283 each coordinate substrate.

This sequence belongs to the F420-dependent glucose-6-phosphate dehydrogenase family. In terms of assembly, homodimer.

It carries out the reaction oxidized coenzyme F420-(gamma-L-Glu)(n) + D-glucose 6-phosphate + H(+) = 6-phospho-D-glucono-1,5-lactone + reduced coenzyme F420-(gamma-L-Glu)(n). Its function is as follows. Catalyzes the coenzyme F420-dependent oxidation of glucose 6-phosphate (G6P) to 6-phosphogluconolactone. This Segniliparus rotundus (strain ATCC BAA-972 / CDC 1076 / CIP 108378 / DSM 44985 / JCM 13578) protein is F420-dependent glucose-6-phosphate dehydrogenase.